A 468-amino-acid polypeptide reads, in one-letter code: UDP-glucosyl transferase 74CD1 (468 aa).

Residue Gly20 coordinates UDP-alpha-D-glucose. The active-site Proton acceptor is the His21. The Charge relay role is filled by Asp114. Ser292, Trp344, Gln347, His362, Trp365, Asn366, Ser367, Glu370, Asp386, and Gln387 together coordinate UDP-alpha-D-glucose.

Belongs to the UDP-glycosyltransferase family. As to expression, mainly expressed in flowers, flower buds and young leaves, and, to a lesser extent, in old leaves, stems and roots.

The protein operates within secondary metabolite biosynthesis; terpenoid biosynthesis. In terms of biological role, component of the oleanane-type triterpene saponins (e.g. saponarioside A and saponarioside B) biosynthetic pathway, leading to the production of natural products with detergent properties used as traditional sources of soap. A glycosyltransferase that, together with SDR1, mediates the conversion of QA-tri to QA-triF; UGT74CD1 may transfer 4-keto-6-deoxy-glucose to QA-tri, which is in turn reduced to D-fucose by SDR1, thus leading to QA-triF formation via the initiation of the C-28 sugar chain. This is UDP-glucosyl transferase 74CD1 from Saponaria officinalis (Common soapwort).